The following is a 283-amino-acid chain: 4-diphosphocytidyl-2-C-methyl-D-erythritol kinase (283 aa).

Lys10 is a catalytic residue. 99-109 is an ATP binding site; sequence PMGGGLGGGSS. Asp141 is an active-site residue.

This sequence belongs to the GHMP kinase family. IspE subfamily. Homodimer.

The enzyme catalyses 4-CDP-2-C-methyl-D-erythritol + ATP = 4-CDP-2-C-methyl-D-erythritol 2-phosphate + ADP + H(+). It participates in isoprenoid biosynthesis; isopentenyl diphosphate biosynthesis via DXP pathway; isopentenyl diphosphate from 1-deoxy-D-xylulose 5-phosphate: step 3/6. Its function is as follows. Catalyzes the phosphorylation of the position 2 hydroxy group of 4-diphosphocytidyl-2C-methyl-D-erythritol. This is 4-diphosphocytidyl-2-C-methyl-D-erythritol kinase from Escherichia coli O81 (strain ED1a).